We begin with the raw amino-acid sequence, 310 residues long: MVMKFLIVGVGAIGSAYLAFLTRAGHEAAGLVRRNPVNRIKVEGIWGEFEIPVKTFTKVEEVPFIPDIVIISVKSYDTEEALKKVKPVVGENTFIMIAQNGYGNYEKAVEIYGEGKVILSRIIFGSKVIKPGHIRITVSADEVVIGDPSGKIDEEFLKNLARTFTEAGIPTRYERDVYKYLVDKIIYNSALNPLGALFEVNYGSLAENPHTKELMNRVIDEIFQVIEKAKLPCFWKSADEYKKVFYEKLIPPTAEHYPSMLEDVKKGKTEIEALNGAIVELGKKYGVSTPTNEFITKMVKAKELFNLKDT.

Residues 9–14 (GVGAIG) and Asn-100 contribute to the NADP(+) site. Residue Asn-100 participates in substrate binding. Residue Lys-184 is the Proton donor of the active site. Residues Asn-188, Asn-192, and Ser-259 each contribute to the substrate site. Position 270 (Glu-270) interacts with NADP(+).

It belongs to the ketopantoate reductase family.

It localises to the cytoplasm. It carries out the reaction (R)-pantoate + NADP(+) = 2-dehydropantoate + NADPH + H(+). The protein operates within cofactor biosynthesis; (R)-pantothenate biosynthesis; (R)-pantoate from 3-methyl-2-oxobutanoate: step 2/2. Functionally, catalyzes the NADPH-dependent reduction of ketopantoate into pantoic acid. The protein is 2-dehydropantoate 2-reductase of Aquifex aeolicus (strain VF5).